Reading from the N-terminus, the 246-residue chain is Large ribosomal subunit protein uL3 (246 aa).

Gln-151 bears the N5-methylglutamine mark.

Belongs to the universal ribosomal protein uL3 family. In terms of assembly, part of the 50S ribosomal subunit. Forms a cluster with proteins L14 and L19. In terms of processing, methylated by PrmB.

In terms of biological role, one of the primary rRNA binding proteins, it binds directly near the 3'-end of the 23S rRNA, where it nucleates assembly of the 50S subunit. This chain is Large ribosomal subunit protein uL3, found in Bartonella bacilliformis (strain ATCC 35685 / KC583 / Herrer 020/F12,63).